The sequence spans 402 residues: MYTMELRFIRGGVCAVDGVLAAGCREGKYGVGLIINRGSTAAAVFTSNRVRAEPVKLTERVIADGSISAIVANSGNANCFTGREGMDDARRMARKVAESLSMDESEVAVASTGVIGRRMPIDKIEFLIQSAAAQLENSEAASGALAEAIMTTDTFPKEVAVEFELETGEKARIGAVAKGSGMIAPNMATMLSFITTDVDASSSELTEALRVAVDESFNMLIVDGDESTNDMVIISSTRTSGRIDSNFREALVAVCRELARMMARDGEGVTKSFQVDVVNAGTHEDAKMAARAIAGSSLVKTAIFGADPNWGRIVAAAGYSGAEFDPEEISVTLESDSESVVIVDHGDILAFEGTEELETAERVMTSKEIRIIVDLAAGDESATAYGCDLTYDYVRINAEYTT.

The substrate site is built by Thr151, Lys178, Thr189, Glu267, Asn397, and Thr402. Catalysis depends on Thr189, which acts as the Nucleophile.

This sequence belongs to the ArgJ family. Heterotetramer of two alpha and two beta chains.

It is found in the cytoplasm. The catalysed reaction is N(2)-acetyl-L-ornithine + L-glutamate = N-acetyl-L-glutamate + L-ornithine. The protein operates within amino-acid biosynthesis; L-arginine biosynthesis; L-ornithine and N-acetyl-L-glutamate from L-glutamate and N(2)-acetyl-L-ornithine (cyclic): step 1/1. Catalyzes the transfer of the acetyl group from N(2)-acetylornithine to glutamate, forming N-acetylglutamate and L-ornithine. This chain is Glutamate N-acetyltransferase, found in Methanothermobacter thermautotrophicus (strain ATCC 29096 / DSM 1053 / JCM 10044 / NBRC 100330 / Delta H) (Methanobacterium thermoautotrophicum).